Consider the following 275-residue polypeptide: Large ribosomal subunit protein uL2 (275 aa).

A disordered region spans residues 224 to 275 (AMNPVDHPHGGGEAKAGQGNPHPVTPWGVPTKGYKTRKNKRTQQFIVRDRRG).

Belongs to the universal ribosomal protein uL2 family. Part of the 50S ribosomal subunit. Forms a bridge to the 30S subunit in the 70S ribosome.

Its function is as follows. One of the primary rRNA binding proteins. Required for association of the 30S and 50S subunits to form the 70S ribosome, for tRNA binding and peptide bond formation. It has been suggested to have peptidyltransferase activity; this is somewhat controversial. Makes several contacts with the 16S rRNA in the 70S ribosome. The chain is Large ribosomal subunit protein uL2 from Xanthomonas axonopodis pv. citri (strain 306).